A 257-amino-acid polypeptide reads, in one-letter code: Phosphate import ATP-binding protein PstB (257 aa).

An ABC transporter domain is found at 11-252; sequence IQVRDLNFYY…PAKKQTEDYI (242 aa). 43 to 50 is a binding site for ATP; sequence GPSGCGKS.

The protein belongs to the ABC transporter superfamily. Phosphate importer (TC 3.A.1.7) family. As to quaternary structure, the complex is composed of two ATP-binding proteins (PstB), two transmembrane proteins (PstC and PstA) and a solute-binding protein (PstS).

It is found in the cell inner membrane. It carries out the reaction phosphate(out) + ATP + H2O = ADP + 2 phosphate(in) + H(+). Its function is as follows. Part of the ABC transporter complex PstSACB involved in phosphate import. Responsible for energy coupling to the transport system. The chain is Phosphate import ATP-binding protein PstB from Salmonella paratyphi A (strain ATCC 9150 / SARB42).